Reading from the N-terminus, the 241-residue chain is Nuclear receptor-interacting protein 3 (241 aa).

The chain is Nuclear receptor-interacting protein 3 (NRIP3) from Homo sapiens (Human).